The sequence spans 227 residues: 7-cyano-7-deazaguanine synthase (227 aa).

10–20 (LSGGLDSCVAT) is a binding site for ATP. Positions 193, 201, 204, and 207 each coordinate Zn(2+).

Belongs to the QueC family. The cofactor is Zn(2+).

It carries out the reaction 7-carboxy-7-deazaguanine + NH4(+) + ATP = 7-cyano-7-deazaguanine + ADP + phosphate + H2O + H(+). Its pathway is purine metabolism; 7-cyano-7-deazaguanine biosynthesis. In terms of biological role, catalyzes the ATP-dependent conversion of 7-carboxy-7-deazaguanine (CDG) to 7-cyano-7-deazaguanine (preQ(0)). The sequence is that of 7-cyano-7-deazaguanine synthase from Methanobrevibacter smithii (strain ATCC 35061 / DSM 861 / OCM 144 / PS).